Consider the following 256-residue polypeptide: 3-deoxy-manno-octulosonate cytidylyltransferase (256 aa).

This sequence belongs to the KdsB family.

The protein resides in the cytoplasm. It catalyses the reaction 3-deoxy-alpha-D-manno-oct-2-ulosonate + CTP = CMP-3-deoxy-beta-D-manno-octulosonate + diphosphate. It participates in nucleotide-sugar biosynthesis; CMP-3-deoxy-D-manno-octulosonate biosynthesis; CMP-3-deoxy-D-manno-octulosonate from 3-deoxy-D-manno-octulosonate and CTP: step 1/1. It functions in the pathway bacterial outer membrane biogenesis; lipopolysaccharide biosynthesis. Activates KDO (a required 8-carbon sugar) for incorporation into bacterial lipopolysaccharide in Gram-negative bacteria. In Histophilus somni (strain 2336) (Haemophilus somnus), this protein is 3-deoxy-manno-octulosonate cytidylyltransferase.